We begin with the raw amino-acid sequence, 171 residues long: Large ribosomal subunit protein bL9 (171 aa).

It belongs to the bacterial ribosomal protein bL9 family.

Binds to the 23S rRNA. The polypeptide is Large ribosomal subunit protein bL9 (Rickettsia conorii (strain ATCC VR-613 / Malish 7)).